Here is a 326-residue protein sequence, read N- to C-terminus: Fructokinase (326 aa).

Positions 275–326 (EQALRNGPDPRRQSRRRHRLPRRRQSTLGARDWSLRLEQDSDPHPPDDTFSP) are disordered. Residues 287–299 (QSRRRHRLPRRRQ) are compositionally biased toward basic residues. Residues 307 to 326 (WSLRLEQDSDPHPPDDTFSP) are compositionally biased toward basic and acidic residues.

Belongs to the carbohydrate kinase PfkB family.

It carries out the reaction D-fructose + ATP = D-fructose 6-phosphate + ADP + H(+). This chain is Fructokinase (frk), found in Rhizobium leguminosarum bv. trifolii.